The primary structure comprises 545 residues: MAAKEVKFGRSAREKMLRGVDILADAVKVTLGPKGRNVVIDKSFGAPRITKDGVTVAKEIELEDKFENMGAQMVREVASKTNDIAGDGTTTATVLAQAIVREGAKAVAAGMNPMDLKRGIDLAVAEVVKDLLAKAKTINTSDEVAQVGTISANGEKQIGLDIAEAMQKVGNEGVITVEEAKTAETELEVVDGMQFDRGYLSPYFVTNPEKMVADLEDAYILLHEKKLSNLQAMLPVLEAVVQTGKPLLIIAEDVEGEALATLVVNKLRGGLKIAAVKAPGFGDRRKAMLEDIAILTGGTVISEDLGIKLESVTLDMLGRAKKVSITKENTTIVDGAGQKSDIEGRVAQIKAQIEETTSDYDREKLQERLAKLAGGVAVIRVGGATEVEVKEKKDRIDDALNATRAAVQEGIVPGGGVALLRSSVKITVKGENDDQDAGVNIVRRALQSPARQIVENAGDEASIVVGKILEKDTDDFGYNAQTGEYGDMIAMGIIDPVKVVRTALQDAASVASLLITTEAMIAELPKKDAPAMPGGMGGMGGMDMM.

Residues 30–33 (TLGP), K51, 87–91 (DGTTT), G415, and D495 contribute to the ATP site.

This sequence belongs to the chaperonin (HSP60) family. In terms of assembly, forms a cylinder of 14 subunits composed of two heptameric rings stacked back-to-back. Interacts with the co-chaperonin GroES.

The protein resides in the cytoplasm. It carries out the reaction ATP + H2O + a folded polypeptide = ADP + phosphate + an unfolded polypeptide.. Together with its co-chaperonin GroES, plays an essential role in assisting protein folding. The GroEL-GroES system forms a nano-cage that allows encapsulation of the non-native substrate proteins and provides a physical environment optimized to promote and accelerate protein folding. This is Chaperonin GroEL 5 from Sinorhizobium medicae (strain WSM419) (Ensifer medicae).